A 236-amino-acid polypeptide reads, in one-letter code: 2,3,4,5-tetrahydropyridine-2,6-dicarboxylate N-acetyltransferase (236 aa).

It belongs to the transferase hexapeptide repeat family. DapH subfamily.

The enzyme catalyses (S)-2,3,4,5-tetrahydrodipicolinate + acetyl-CoA + H2O = L-2-acetamido-6-oxoheptanedioate + CoA. The protein operates within amino-acid biosynthesis; L-lysine biosynthesis via DAP pathway; LL-2,6-diaminopimelate from (S)-tetrahydrodipicolinate (acetylase route): step 1/3. Catalyzes the transfer of an acetyl group from acetyl-CoA to tetrahydrodipicolinate. This Listeria innocua serovar 6a (strain ATCC BAA-680 / CLIP 11262) protein is 2,3,4,5-tetrahydropyridine-2,6-dicarboxylate N-acetyltransferase.